The primary structure comprises 309 residues: Glycine-rich RNA-binding protein 3, mitochondrial (309 aa).

The transit peptide at 1-37 (MAFLSKFGNILKQTTNKQLNAQVSLSSPSLFQAIRCM) directs the protein to the mitochondrion. Positions 40–118 (SKLFIGGMAY…RVVKVNYAND (79 aa)) constitute an RRM domain. The interval 247-309 (FAGDSQFGGS…GEFEDVAKRA (63 aa)) is disordered. Over residues 258 to 273 (VGNSSQFGGDNTQFTA) the composition is skewed to polar residues.

This sequence belongs to the GR-RBP family. Homodimer. Interacts with ORRM2 and MORF8/RIP1. Interacts with RBG5/ORRM4. Binds to RBG2/ORRM5.

Its subcellular location is the mitochondrion. Its function is as follows. Possibly has a role in RNA transcription or processing during stress. Involved in C-to-U editing of mitochondrial RNA. Functions as a minor mitochondrial editing factor. Controls 6 percent of the mitochondrial editing sites. The protein is Glycine-rich RNA-binding protein 3, mitochondrial of Arabidopsis thaliana (Mouse-ear cress).